We begin with the raw amino-acid sequence, 29 residues long: ATP synthase subunit 9, mitochondrial (29 aa).

The protein belongs to the ATPase C chain family. F-type ATPases have 2 components, CF(1) - the catalytic core - and CF(0) - the membrane proton channel. CF(1) has five subunits: alpha(3), beta(3), gamma(1), delta(1), epsilon(1). CF(0) has three main subunits: a, b and c.

Its subcellular location is the mitochondrion membrane. Its function is as follows. Mitochondrial membrane ATP synthase (F(1)F(0) ATP synthase or Complex V) produces ATP from ADP in the presence of a proton gradient across the membrane which is generated by electron transport complexes of the respiratory chain. F-type ATPases consist of two structural domains, F(1) - containing the extramembraneous catalytic core and F(0) - containing the membrane proton channel, linked together by a central stalk and a peripheral stalk. During catalysis, ATP synthesis in the catalytic domain of F(1) is coupled via a rotary mechanism of the central stalk subunits to proton translocation. Part of the complex F(0) domain. A homomeric c-ring of probably 10 subunits is part of the complex rotary element. The sequence is that of ATP synthase subunit 9, mitochondrial (ATP9) from Wickerhamomyces pijperi (Yeast).